Consider the following 456-residue polypeptide: tRNA-2-methylthio-N(6)-dimethylallyladenosine synthase (456 aa).

Residues 19–136 enclose the MTTase N-terminal domain; sequence LTFNVQTFGC…LAELIYARHT (118 aa). Positions 28, 63, 97, 173, 177, and 180 each coordinate [4Fe-4S] cluster. Positions 159 to 389 constitute a Radical SAM core domain; it reads QKYKFKAGVN…LTTIRESSSK (231 aa). One can recognise a TRAM domain in the interval 392 to 455; it reads KDDEGKIAEV…GFYYMGEMME (64 aa).

Belongs to the methylthiotransferase family. MiaB subfamily. Monomer. It depends on [4Fe-4S] cluster as a cofactor.

Its subcellular location is the cytoplasm. It catalyses the reaction N(6)-dimethylallyladenosine(37) in tRNA + (sulfur carrier)-SH + AH2 + 2 S-adenosyl-L-methionine = 2-methylsulfanyl-N(6)-dimethylallyladenosine(37) in tRNA + (sulfur carrier)-H + 5'-deoxyadenosine + L-methionine + A + S-adenosyl-L-homocysteine + 2 H(+). Functionally, catalyzes the methylthiolation of N6-(dimethylallyl)adenosine (i(6)A), leading to the formation of 2-methylthio-N6-(dimethylallyl)adenosine (ms(2)i(6)A) at position 37 in tRNAs that read codons beginning with uridine. This Lachnoclostridium phytofermentans (strain ATCC 700394 / DSM 18823 / ISDg) (Clostridium phytofermentans) protein is tRNA-2-methylthio-N(6)-dimethylallyladenosine synthase.